The primary structure comprises 188 residues: MLVFAGLGNPGKTYENTRHNVGFMTIDELSKEWNIPLDKTKFNGQYGIGFVSGKKVLLVKPLTYMNLSGECLRPLLDYYEIPVDNLKVIYDDLDLPTGRIRLRTKGSAGGHNGIKSTIQHLGTSEFNRIRIGIGRPVNGMKVVDYVLGAFTDEEEPAIKEAVRQSAKACEASLEKPFLEVMNEFNAKV.

Tyrosine 14 contacts tRNA. Residue histidine 19 is the Proton acceptor of the active site. The tRNA site is built by tyrosine 64, asparagine 66, and asparagine 112.

Belongs to the PTH family. In terms of assembly, monomer.

Its subcellular location is the cytoplasm. It catalyses the reaction an N-acyl-L-alpha-aminoacyl-tRNA + H2O = an N-acyl-L-amino acid + a tRNA + H(+). Hydrolyzes ribosome-free peptidyl-tRNAs (with 1 or more amino acids incorporated), which drop off the ribosome during protein synthesis, or as a result of ribosome stalling. Its function is as follows. Catalyzes the release of premature peptidyl moieties from peptidyl-tRNA molecules trapped in stalled 50S ribosomal subunits, and thus maintains levels of free tRNAs and 50S ribosomes. This chain is Peptidyl-tRNA hydrolase, found in Bacillus licheniformis (strain ATCC 14580 / DSM 13 / JCM 2505 / CCUG 7422 / NBRC 12200 / NCIMB 9375 / NCTC 10341 / NRRL NRS-1264 / Gibson 46).